Here is a 615-residue protein sequence, read N- to C-terminus: Cysteine-rich receptor-like protein kinase 1 (615 aa).

Positions 1 to 28 are cleaved as a signal peptide; that stretch reads MQICASIAQFLAWVSFLVLLATVGSSSS. Gnk2-homologous domains are found at residues 29-131 and 137-237; these read SESL…DRDF and DPTF…THKF. Over 29–266 the chain is Extracellular; that stretch reads SESLLNCQPL…SFFPHLSDRD (238 aa). N-linked (GlcNAc...) asparagine glycans are attached at residues Asn-100 and Asn-165. The helical transmembrane segment at 267 to 287 threads the bilayer; it reads VTRLAIAAISLSILTSLGAFI. At 288-615 the chain is on the cytoplasmic side; the sequence is SYRRVSRKRK…VLMPDEETRV (328 aa). One can recognise a Protein kinase domain in the interval 318 to 602; that stretch reads FHDSMKLGQG…FEYPKQPPFL (285 aa). Residues 324–332 and Lys-346 each bind ATP; that span reads LGQGGAGSV. Asp-443 functions as the Proton acceptor in the catalytic mechanism.

Belongs to the protein kinase superfamily. Ser/Thr protein kinase family. CRK subfamily. As to expression, expressed in the whole plant at low levels.

The protein localises to the membrane. It carries out the reaction L-seryl-[protein] + ATP = O-phospho-L-seryl-[protein] + ADP + H(+). The enzyme catalyses L-threonyl-[protein] + ATP = O-phospho-L-threonyl-[protein] + ADP + H(+). The polypeptide is Cysteine-rich receptor-like protein kinase 1 (Arabidopsis thaliana (Mouse-ear cress)).